The sequence spans 289 residues: Vesicular-fusion protein SEC17 (289 aa).

The protein belongs to the SNAP family.

It localises to the membrane. Functionally, required for vesicular transport between the endoplasmic reticulum and the Golgi apparatus. The sequence is that of Vesicular-fusion protein SEC17 (SEC17) from Coprinopsis cinerea (strain Okayama-7 / 130 / ATCC MYA-4618 / FGSC 9003) (Inky cap fungus).